We begin with the raw amino-acid sequence, 785 residues long: E3 UFM1-protein ligase 1 homolog (785 aa).

Residues 404 to 482 (NASFQDQDDD…AGGGGGNKKT (79 aa)) are disordered.

This sequence belongs to the UFL1 family.

Its function is as follows. E3 UFM1-protein ligase that mediates ufmylation of target proteins. The protein is E3 UFM1-protein ligase 1 homolog of Drosophila persimilis (Fruit fly).